We begin with the raw amino-acid sequence, 2550 residues long: MSSAPIPQSEPLAIIGLACKYANGIDSPEALYEQVMAARCMHGAMPSNRMDASFYYHPTSEATGTSYSKGGYFLNCDLNAFDSPFFQLSEIDVMAMDPQQKMLLENVYHALENAGIPLKNAISSPTSVFVGCSNNDHLALANSDLLLSLKGKGTGTSPSILANRVSWFYDFQGTSQTIDTACSSSLVAFHQGCMDVRAGKSAMSIISGINLIEHPGPTLYLSSLGVLSPDGKSMSFDARANGYGRGEGVGTVIVKPLQAALRDGNRIRAIVRSTGSNQDGRTPGITVPNPSAQERLIHDVYRVADLDPRRTGYVEAHGTGTQVGDPLEVQAILAALGVARDSPLYVGSVKSVLGHLEGGAGLAGLISATLAVESKMIPPVAGLQSLNPKIPQRDDLKFAREATPWPRWDVRRASINSFGFGGTNAHAVVEDVEGFFADLFGQYIPGALPAPEVDTSLETTPMLSKPLMSGNASNQSVQSWSTSRLFVISAFDEAGIQRNTSALAEYLDSKSTTADTDGEDRLLNNLCHTLNEKRTRFDWRSYHVADSIASLRESLQHSRAIRQSSAPKPIRFVFTGQGANWAGMACDMLKYPLFRRRIQEAAAYLRELGSGWDLFERMTSKAGELDEPTFAQSSCVAVQVALVDLLASWKVVPETVVGHSSGEIAAAYCAGHISRQAAWKVAFCRGKVCARRTDGQGRMLAAAMPVHQLERVVARVNKGQPTSVKIGCYNSPRNLTLTGRYDDILRLKLELDDVGALNRMLPVKVAYHSDYMQDAAPEYLSLLGEILDGGDTIHKDASIQMISSVTGQPVPAGDVQQASYWVKNLVSPVRFCTALLASMEFPGTTGKREDTLIEIGPHSTLRSAIKESFAEVPEYQSVQYGSLLKRYETNGSTILHTLGMMFCSGHEISLAAINDRRVGTRKIPMLLTGLPGYAFDHSRSVRGTSRRIEQVKFPTYNRHELLGVPVEDSNPYEQRWRNVLRPDDLPWLRMNRMKGQIHFPGVAYILMATEALQQRVARTMTIPRVRIANMSILAPLQVPDSPSGVEIQVSIYPTNVRANGATDWATFRIISYDTAEKTWVEHCVGSVRAETGPPDLCVNTALRKQCAEPVDIAQMYHGFTAAGMDFGENLRNIQAMKVSPDRTACTATITAPSIAPQAHDQYPLHPCSFESILHALLYLCEASQSPMVTNYIEEVVIVNPNDTGAREFESFARRQRTSATTWTCDVSITTNVGDQDIQIKGLDLVQLPANNDDAVDAESFYTVNWRPDVKLLASADALHNSAPVDAAQHLPTFDEHEGYQLASAIFLQEAKEYVTRTGLPPLPTHHQAFMDWMEEEYQSINNGTTPLLDKSLLDGIRADPDRRKSLLDRVARQSARGELLVRVGTRMIDILEQKIDCLEVMFGPDNLMERTYEEGLPGQIAPAVAGYLHCLAHAQTGIKILEVGAGTGSATKVMLDSLRPTEAQDGGGLVSSVSSYDFTDISAAFFEKARARFHDWADILRPKLLNIEQDPAAQGFELGSYDLVIATHVLHATADLNVSLKNIRALLKEGGDLIVIENIQPKFMCSQLPFGLLPGWWRSVEPYRKTNPLILKEHWTEELQNAGLRPRLIINDTDDGINEMSAFVASPMPKVLDGSQPCSIIYSSTYPGQQQLALEVADRLPRSCTAAVVDLADISLDHSDTVGIVLVGCQGLDLSELTSSEYDRVKFILTSFQKLLWVTCDPTDVPKSALATGLVRSTRWEREHDNVNIILLSVSLSRPTPLTISSEIVRLCENAFISCKRVPPNSEYRIEGSNGVLLTNRLFPAAGINECIGLGSRPRSRQVPLGTVDHPIKLTSIGSQQPNGFHFIEDPQAHEPLDPDEVKIRIHAAGLDEEDADQLSRLIPGHGFGDQGSGTVVEIGHGVQGIQVGDQVMALRTGPSCALQTFFRTHSATVAKIPDGIRLSDAAALPLPWVTAYHSLVTVARLDSQEKVLIHPAIGATGQAAVQVASMLGATVYATVETDAQRQTLAEYGVEESHILDSASVEKQFGTQTSTQGVDVLLNLRRDGLEFLHLSCLSPFGRLVDISGSRAFPSQVNSPSNQSYYRVNMRELSQLKPESIRQTLRTVAQLLASPTIRPVAPFRVGYSQLQRVLSEIRRGSRGPWVIQPLPNDPIPPLGSHQFDPSASYLLIGGFGGLGRSVARWMHHRGAKHFIFFSRSGASSAAARELCADLRAAGCAVSDMICDTTDAQAVAKAMAQCEASMPPIRGCLQASMVLEDSMLSNMDHTRFLGAITPKVQGTINVASALAPIKSNLDFFVMLSSSAGIVGNRGQANYAAANTFLDAFAGQLVTQGYPATSVSLGSVLSVGWVAENQHKLRIAFAFGALSEDLLLSILEYHMDPAWGAAQSIQTCHTVVGVRSARDFQRQSIPLPGFMAHPLFSPLLAIAGRSQTAEQAAEAPVSQGLREASSMEAAVEVVTRAIVHKLARIMALSVQEIDPQRSLGSYGVDSLVTVDLKAWFQREVGVSIGSGELLGEMAMTQLAQQAADASQFLPAELRGKLRKNTDIHV.

Residues 9 to 431 (SEPLAIIGLA…GTNAHAVVED (423 aa)) form the Ketosynthase family 3 (KS3) domain. Residues C182, H317, and H355 each act as for beta-ketoacyl synthase activity in the active site. Residues 572–894 (FVFTGQGANW…KRYETNGSTI (323 aa)) form a malonyl-CoA:ACP transacylase (MAT) domain region. The interval 959 to 1094 (HELLGVPVED…GSVRAETGPP (136 aa)) is N-terminal hotdog fold. Residues 959-1252 (HELLGVPVED…DLVQLPANND (294 aa)) are dehydratase (DH) domain. In terms of domain architecture, PKS/mFAS DH spans 959–1253 (HELLGVPVED…LVQLPANNDD (295 aa)). The C-terminal hotdog fold stretch occupies residues 1107–1253 (AEPVDIAQMY…LVQLPANNDD (147 aa)). Positions 1420 and 1442 each coordinate S-adenosyl-L-methionine. Positions 1433–1612 (HAQTGIKILE…GLRPRLIIND (180 aa)) are methyltransferase (CMeT) domain. The segment at 1859 to 1919 (PDEVKIRIHA…DQVMALRTGP (61 aa)) is enoyl reductase (ER) (ER) domain. The ketoreductase (KR) domain stretch occupies residues 2166–2345 (ASYLLIGGFG…PATSVSLGSV (180 aa)). A Carrier domain is found at 2454–2531 (AAVEVVTRAI…QLAQQAADAS (78 aa)). S2491 carries the post-translational modification O-(pantetheine 4'-phosphoryl)serine.

The cofactor is pantetheine 4'-phosphate.

The catalysed reaction is 4 malonyl-CoA + acetyl-CoA + 5 NADPH + 9 H(+) = 7-methylmellein + 3 CO2 + 5 NADP(+) + 5 CoA + 4 H2O. It participates in mycotoxin biosynthesis. Functionally, highly reducing polyketide synthase; part of the gene cluster that mediates the biosynthesis of ochratoxin A (OTA), a mycotoxin composed of a chlorinated type I polyketide dihydroisocoumarin moiety linked to L-phenylalanine, and demonstrated to have nephrotoxic, immunotoxic, genotoxic, neurotoxic, and teratogenic properties. OtaA catalyzes the condensation of one acetate and 4 malonate units to form the isocoumarin group. The pathway begins with the highly reducing polyketide synthase otaA that catalyzes the formation of the isocoumarin group during the initial stages of biosynthesis, starting from one acetate and 4 malonate units, to originate the characteristic pentaketide skeleton 7-methylmellein (7-MM) of the OTA molecule. The newly identified cyclase otaY might be involved in the polyketide cyclization reaction during the initial steps of the OTA biosynthesis. 7-MM is then oxidized into 7-carboxymellein (also called ochratoxin beta) by the cytochrome P450 monooxygenase otaC. The NRPS encoded by the otaB gene is involved in the linking of phenylalanine to the dihydroisocoumarin ring. The reaction catalyzed by NRPS results in the production of ochratoxin B (OTB), which is the non-chlorinated analog of OTA and which subsequently serves as the substrate of the halogenase otaD for chlorination activity to form the final molecular structure of OTA, containing a chlorine atom in the C-5 position of the molecule. The protein is Highly reducing polyketide synthase otaA of Aspergillus niger (strain ATCC MYA-4892 / CBS 513.88 / FGSC A1513).